A 486-amino-acid chain; its full sequence is Vanillin dehydrogenase (486 aa).

NAD(+)-binding positions include 210–211, 230–231, and 252–254; these read GP, GS, and ELG. Catalysis depends on Glu-252, which acts as the Proton acceptor. The active-site Nucleophile is Cys-286. 380 to 382 lines the NAD(+) pocket; it reads EVF.

The protein belongs to the aldehyde dehydrogenase family.

The enzyme catalyses vanillin + NAD(+) + H2O = vanillate + NADH + 2 H(+). Catalyzes NAD(+)-dependent oxidation of vanillin to vanillate. Also oxidizes other aromatic aldehydes including benzaldehyde, coniferyl aldehyde and cinnamaldehyde, but has a preference for vanillin. Not active with NADP(+). Involved in the degradation pathway of lignin-derived aromatic compounds of plant cell walls. Catalyzes the conversion of vanillin to vanillate due to toxicity of vanillin to the cells. This Amycolatopsis sp. (strain ATCC 39116 / 75iv2) protein is Vanillin dehydrogenase.